The following is a 367-amino-acid chain: Undecaprenyl-phosphate alpha-N-acetylglucosaminyl 1-phosphate transferase (367 aa).

9 helical membrane passes run leucine 3 to leucine 23, glycine 45 to leucine 65, tyrosine 69 to methionine 89, tryptophan 129 to isoleucine 149, isoleucine 158 to tryptophan 178, methionine 187 to leucine 207, valine 213 to glutamate 233, isoleucine 242 to methionine 262, and valine 318 to isoleucine 338.

The protein belongs to the glycosyltransferase 4 family. WecA subfamily. Requires Mg(2+) as cofactor. The cofactor is Mn(2+).

The protein resides in the cell inner membrane. The catalysed reaction is di-trans,octa-cis-undecaprenyl phosphate + UDP-N-acetyl-alpha-D-glucosamine = N-acetyl-alpha-D-glucosaminyl-di-trans,octa-cis-undecaprenyl diphosphate + UMP. Its pathway is bacterial outer membrane biogenesis; LPS O-antigen biosynthesis. The protein operates within bacterial outer membrane biogenesis; enterobacterial common antigen biosynthesis. Functionally, catalyzes the transfer of the GlcNAc-1-phosphate moiety from UDP-GlcNAc onto the carrier lipid undecaprenyl phosphate (C55-P), yielding GlcNAc-pyrophosphoryl-undecaprenyl (GlcNAc-PP-C55). This Salmonella typhi protein is Undecaprenyl-phosphate alpha-N-acetylglucosaminyl 1-phosphate transferase.